Consider the following 556-residue polypeptide: 3-phosphoinositide-dependent protein kinase 1 (556 aa).

The residue at position 9 (Tyr9) is a Phosphotyrosine; by SRC and INSR. Ser25 is modified (phosphoserine). Residues 26-80 (PSMVRTQTESSTPPGIPGGSRQGPAMDGTAAEPRPGAGSLQHAQPPPQPRKKRPE) are disordered. Over residues 28–38 (MVRTQTESSTP) the composition is skewed to polar residues. Residues 82–342 (FKFGKILGEG…YGPLKAHPFF (261 aa)) form the Protein kinase domain. ATP contacts are provided by residues 92 to 94 (SFS) and Lys111. The segment at 113-157 (LEKRHIIKENKVPYVTRERDVMSRLDHPFFVKLYFTFQDDEKLYF) is PIF-pocket. ATP contacts are provided by residues 160–162 (SYA) and Glu166. Asp205 serves as the catalytic Proton acceptor. ATP-binding residues include Glu209 and Asp223. Position 241 is a phosphoserine; by autocatalysis (Ser241). N6-acetyllysine is present on Lys304. Phosphothreonine; by MELK is present on Thr354. Phosphotyrosine; by SRC and INSR is present on residues Tyr373 and Tyr376. Ser393 is modified (phosphoserine). Position 394 is a phosphoserine; by MAP3K5 (Ser394). Ser396 carries the post-translational modification Phosphoserine. Ser398 carries the phosphoserine; by MAP3K5 modification. Ser410 is subject to Phosphoserine. Residues 459–550 (KMGPVDKRKG…EVWRQRYQSH (92 aa)) enclose the PH domain. The residue at position 501 (Ser501) is a Phosphoserine; by PKC/PRKCQ. Thr513 bears the Phosphothreonine; by autocatalysis mark. Ser529 is modified (phosphoserine; by PKC/PRKCQ).

It belongs to the protein kinase superfamily. AGC Ser/Thr protein kinase family. PDPK1 subfamily. Homodimer in its autoinhibited state. Active as monomer. Interacts with NPRL2, PPARG, PAK1, PTK2B, GRB14, PKN1 (via C-terminus), STRAP and IKKB. The Tyr-9 phosphorylated form interacts with SRC, RASA1 and CRK (via their SH2 domains). Interacts with SGK3 in a phosphorylation-dependent manner. The tyrosine-phosphorylated form interacts with PTPN6. The Ser-241 phosphorylated form interacts with YWHAH and YWHAQ. Binds INSR in response to insulin. Interacts (via PH domain) with SMAD3, SMAD4 and SMAD7. Interacts with PKN2; the interaction stimulates PDPK1 autophosphorylation, its PI(3,4,5)P3-dependent kinase activity toward 'Ser-473' of AKT1 but also activates its kinase activity toward PRKCD and PRKCZ. In terms of processing, phosphorylation on Ser-241 in the activation loop is required for full activity. PDPK1 itself can autophosphorylate Ser-241, leading to its own activation. Autophosphorylation is inhibited by the apoptotic C-terminus cleavage product of PKN2. Tyr-9 phosphorylation is critical for stabilization of both PDPK1 and the PDPK1/SRC complex via HSP90-mediated protection of PDPK1 degradation. Angiotensin II stimulates the tyrosine phosphorylation of PDPK1 in vascular smooth muscle in a calcium- and SRC-dependent manner. Phosphorylated on Tyr-9, Tyr-373 and Tyr-376 by INSR in response to insulin. Palmitate negatively regulates autophosphorylation at Ser-241 and palmitate-induced phosphorylation at Ser-529 and Ser-501 by PKC/PRKCQ negatively regulates its ability to phosphorylate PKB/AKT1. Phosphorylation at Thr-354 by MELK partially inhibits kinase activity, the inhibition is cooperatively enhanced by phosphorylation at Ser-394 and Ser-398 by MAP3K5. Autophosphorylated; autophosphorylation is inhibited by the apoptotic C-terminus cleavage product of PKN2. Post-translationally, monoubiquitinated in the kinase domain, deubiquitinated by USP4. Appears to be expressed ubiquitously. The Tyr-9 phosphorylated form is markedly increased in diseased tissue compared with normal tissue from lung, liver, colon and breast.

The protein resides in the cytoplasm. It localises to the nucleus. Its subcellular location is the cell membrane. It is found in the cell junction. The protein localises to the focal adhesion. It carries out the reaction L-seryl-[protein] + ATP = O-phospho-L-seryl-[protein] + ADP + H(+). It catalyses the reaction L-threonyl-[protein] + ATP = O-phospho-L-threonyl-[protein] + ADP + H(+). Homodimerization regulates its activity by maintaining the kinase in an autoinhibitory conformation. NPRL2 down-regulates its activity by interfering with tyrosine phosphorylation at the Tyr-9, Tyr-373 and Tyr-376 residues. The 14-3-3 protein YWHAQ acts as a negative regulator by association with the residues surrounding the Ser-241 residue. STRAP positively regulates its activity by enhancing its autophosphorylation and by stimulating its dissociation from YWHAQ. SMAD2, SMAD3, SMAD4 and SMAD7 also positively regulate its activity by stimulating its dissociation from YWHAQ. Activated by phosphorylation on Tyr-9, Tyr-373 and Tyr-376 by INSR in response to insulin. In terms of biological role, serine/threonine kinase which acts as a master kinase, phosphorylating and activating a subgroup of the AGC family of protein kinases. Its targets include: protein kinase B (PKB/AKT1, PKB/AKT2, PKB/AKT3), p70 ribosomal protein S6 kinase (RPS6KB1), p90 ribosomal protein S6 kinase (RPS6KA1, RPS6KA2 and RPS6KA3), cyclic AMP-dependent protein kinase (PRKACA), protein kinase C (PRKCD and PRKCZ), serum and glucocorticoid-inducible kinase (SGK1, SGK2 and SGK3), p21-activated kinase-1 (PAK1), TSSK3, protein kinase PKN (PKN1 and PKN2). Plays a central role in the transduction of signals from insulin by providing the activating phosphorylation to PKB/AKT1, thus propagating the signal to downstream targets controlling cell proliferation and survival, as well as glucose and amino acid uptake and storage. Negatively regulates the TGF-beta-induced signaling by: modulating the association of SMAD3 and SMAD7 with TGF-beta receptor, phosphorylating SMAD2, SMAD3, SMAD4 and SMAD7, preventing the nuclear translocation of SMAD3 and SMAD4 and the translocation of SMAD7 from the nucleus to the cytoplasm in response to TGF-beta. Activates PPARG transcriptional activity and promotes adipocyte differentiation. Activates the NF-kappa-B pathway via phosphorylation of IKKB. The tyrosine phosphorylated form is crucial for the regulation of focal adhesions by angiotensin II. Controls proliferation, survival, and growth of developing pancreatic cells. Participates in the regulation of Ca(2+) entry and Ca(2+)-activated K(+) channels of mast cells. Essential for the motility of vascular endothelial cells (ECs) and is involved in the regulation of their chemotaxis. Plays a critical role in cardiac homeostasis by serving as a dual effector for cell survival and beta-adrenergic response. Plays an important role during thymocyte development by regulating the expression of key nutrient receptors on the surface of pre-T cells and mediating Notch-induced cell growth and proliferative responses. Provides negative feedback inhibition to toll-like receptor-mediated NF-kappa-B activation in macrophages. Its function is as follows. Catalytically inactive. The protein is 3-phosphoinositide-dependent protein kinase 1 (PDPK1) of Homo sapiens (Human).